A 229-amino-acid chain; its full sequence is Interleukin-22 receptor subunit alpha-2 (229 aa).

An N-terminal signal peptide occupies residues 1–19 (MPKHCFLGLLIMLLTTATE). 2 Fibronectin type-III domains span residues 28–127 (KPQK…TKLD) and 128–229 (PPVV…VQIP). An N-linked (GlcNAc...) asparagine glycan is attached at Asn54. Disulfide bonds link Cys76–Cys84 and Cys204–Cys225.

Belongs to the type II cytokine receptor family.

The protein resides in the secreted. Functionally, receptor for IL22. Binds to IL22, prevents interaction with the functional IL-22R complex and blocks the activity of IL22 (in vitro). May play an important role as an IL22 antagonist in the regulation of inflammatory responses. This is Interleukin-22 receptor subunit alpha-2 (Il22ra2) from Rattus norvegicus (Rat).